We begin with the raw amino-acid sequence, 1384 residues long: MIKNLKQKIKNRFSYSLLSEDDNTDYFSKPCPEDNATLWQRFTFGWTERMLMTGYFNGPLEMKDVSDLPDRNKVNITAPFLDTIDYNSKYPLIKQIYKEFVSRNKISVATKIFVAIVSILSPLCLKYFIYYIKLDESQKTFKFGFLLCVLLFLSSLSLTLSQQYGYWFGLQTSLHARGAITQKIFEKTLRLSNQAKRLYNSGTIMNIISVDVGTFSDFFWNNHIEIFVFPFQILALLILLCWIVGLSGLVGFGVMVVSIPLCTFLSTKIAKNLRISLGYADTRCNLTSEFINGIRFLKLYAWEQLFLDRIEEQRTLQLKYLYRRAIYWILDRMITQVTSALVLVATFSTYALTGNQMTLEVAFTAMTIFVNLRRPLEMLPEAIHRALSLIPSSKRIENFLQSPEIQDQPFLEQYSNNKLSIRNNNNNNNNVSSTSSIASSASSNELFDVKINNGTFDWNEIDDLDSGMIINDVRGFAISSDINDMDEMILGDEKVGKSNDTNNGIEYDGAVQPSSSSYVLNNINFIAPAGKLTVICGIVGSGKTSLVSGLIGEIYRVSGSVNIPNNISFTTQQPFLLSTSLRDNILFGKPMNMERYKKVIDACCLTPDLLQLAAKDLTEIGERGINLSGGQKQRISLARALYSDSDCFILDEPLSAVDPEVASHLFDHCIQGMMKDKTRILVTHQLQFIPSADHIIVVDNGVLTQGTYSELKEKGIDFESIMKTKKLNIDENDQSSTSTTDKKSSTSSSSSELKKSTSLLNSTKELDINTIISEKNDPNLIEKAKLLVKEDRNEGEVGFEVYRQYFRHGSLNLFFLTCALYFISQIIFQLSDFWLTIWTNDETNQHDDKYYILYYCIFIGAFIVFLVVRYFMMASITFAASKKLHSELLNSVAFASCQFFDTNPSGRILNRFSKDISDIDLILMENFSDVLQCGSTVVVALFMMIYITPLISIPFAILVVVYYVIQKLYRASSVELKRMESITRSPVFSLLAEAYNGLVTIRCYQQQKRFIEMMQNHININLRLFFYSFSVHRWVGIRLEFITALIVFFTAFSSLFSSNTGFSVLAVTTALGICSYLNWTIRQMTELEVKMNSVERVESYIKTPREGIRHTSEFEDEIDIDGEIEMDFTKWPSRGEVEFKNVEIKYRPTADPSLKNISFKINAKDHIGVVGRTGAGKSTVGISLFRMVECSKGSIFIDGVDISKVGLHELRDALGIVPQDPFIFSGSIRMNIDPFNKYTDDEIWTALEKVKLKDAISSMPLKLESGVQENGDGLSFGQKQLLCLSRTILKNSKVVLMDEATSGIDYVTAALLKQTIDENFNDCTMLTIAHRLDTIIDSTKIAVIDKGELVEYDTPMNLIKTEGSRFKKLVKYQTDFYEESQKKF.

In terms of domain architecture, ABC transmembrane type-1 1 spans 104–388 (NKISVATKIF…LPEAIHRALS (285 aa)). The next 5 helical transmembrane spans lie at 112–132 (IFVA…IYYI), 140–160 (TFKF…SLTL), 226–246 (IFVF…IVGL), 247–267 (SGLV…FLST), and 333–353 (MITQ…YALT). The ABC transporter 1 domain maps to 505–724 (IEYDGAVQPS…GIDFESIMKT (220 aa)). 537 to 544 (GIVGSGKT) provides a ligand contact to ATP. The disordered stretch occupies residues 729–756 (IDENDQSSTSTTDKKSSTSSSSSELKKS). Residues 735–756 (SSTSTTDKKSSTSSSSSELKKS) are compositionally biased toward low complexity. Helical transmembrane passes span 813-833 (LFFL…LSDF), 852-872 (ILYY…RYFM), 941-961 (LFMM…LVVV), 1036-1056 (GIRL…SSLF), and 1061-1081 (GFSV…NWTI). The ABC transmembrane type-1 2 domain maps to 814–1093 (FFLTCALYFI…MTELEVKMNS (280 aa)). In terms of domain architecture, ABC transporter 2 spans 1137-1371 (VEFKNVEIKY…EGSRFKKLVK (235 aa)). 1171–1178 (GRTGAGKS) provides a ligand contact to ATP.

Belongs to the ABC transporter superfamily. ABCC family. Conjugate transporter (TC 3.A.1.208) subfamily.

The protein localises to the membrane. This Dictyostelium discoideum (Social amoeba) protein is ABC transporter C family member 2 (abcC2).